The sequence spans 1025 residues: MKFFALFIYRPVATILLSVAITLCGILGFRMLPVAPLPQVDFPVIMVSASLPGASPETMASSVATPLERSLGRIAGVSEMTSSSSLGSTRIILQFDFDRDINGAARDVQAAINAAQSLLPSGMPSRPTYRKANPSDAPIMILTLTSDTYSQGELYDFASTQLAPTISQIDGVGDVDVGGSSLPAVRVGLNPQALFNQGVSLDDVRTAVSNANVRKPQGALEDGTHRWQIQTNDELKTAAEYQPLIIHYNNGGAVRLGDVATVTDSVQDVRNAGMTNAKPAILLMIRKLPEANIIQTVDSIRAKLPELQETIPAAIDLQIAQDRSPTIRASLEEVEQTLIISVALVILVVFLFLRSGRATIIPAVSVPVSLIGTFAAMYLCGFSLNNLSLMALTIATGFVVDDAIVVLENIARHLEAGMKPLQAALQGTREVGFTVLSMSLSLVAVFLPLLLMGGLPGRLLREFTVTLSVAIGISLLVSLTLTPMMCGWMLKASKPREQKRLRGFGRMLVALQQGYGKSLKWVLNHTRLVGVVLLGTIALNIWLYISIPKTFFPEQDTGVLMGGIQADQSISFQAMRGKLQDFMKIIRDDPAVDNVTGFTGGSRVNSGMMFITLKPRDERSETAQQIIDRLRVKLAKEPGANLFLMAVQDIRVGGRQSNASYQYTLLSDDLAALREWEPKIRKKLATLPELADVNSDQQDNGAEMNLVYDRDTMARLGIDVQAANSLLNNAFGQRQISTIYQPMNQYKVVMEVDPRYTQDISALEKMFVINNEGKAIPLSYFAKWQPANAPLSVNHQGLSAASTISFNLPTGKSLSDASAAIDRAMTQLGVPSTVRGSFAGTAQVFQETMNSQVILIIAAIATVYIVLGILYESYVHPLTILSTLPSAGVGALLALELFNAPFSLIALIGIMLLIGIVKKNAIMMVDFALEAQRHGNLTPQEAIFQACLLRFRPIMMTTLAALFGALPLVLSGGDGSELRHPLGITIVGGLVMSQLLTLYTTPVVYLFFDRLRLRFSRKPKQTVTE.

Helical transmembrane passes span 3 to 23 (FFAL…AITL), 333 to 353 (EVEQ…FLFL), 360 to 380 (IIPA…MYLC), 387 to 407 (LSLM…IVVL), 431 to 451 (VGFT…PLLL), 469 to 489 (VAIG…CGWM), 528 to 548 (LVGV…ISIP), 853 to 873 (VILI…LYES), 875 to 895 (VHPL…LLAL), 897 to 917 (LFNA…IGIV), 953 to 973 (PIMM…LSGG), and 984 to 1004 (ITIV…TPVV).

Belongs to the resistance-nodulation-cell division (RND) (TC 2.A.6) family. MdtC subfamily. Part of a tripartite efflux system composed of MdtA, MdtB and MdtC. MdtC forms a heteromultimer with MdtB.

It is found in the cell inner membrane. In terms of biological role, the MdtABC tripartite complex confers resistance against novobiocin and deoxycholate. The protein is Multidrug resistance protein MdtC of Escherichia coli O9:H4 (strain HS).